Here is a 231-residue protein sequence, read N- to C-terminus: Biosynthetic peptidoglycan transglycosylase (231 aa).

Residues Ala12 to Pro34 form a helical membrane-spanning segment.

This sequence belongs to the glycosyltransferase 51 family.

Its subcellular location is the cell inner membrane. It carries out the reaction [GlcNAc-(1-&gt;4)-Mur2Ac(oyl-L-Ala-gamma-D-Glu-L-Lys-D-Ala-D-Ala)](n)-di-trans,octa-cis-undecaprenyl diphosphate + beta-D-GlcNAc-(1-&gt;4)-Mur2Ac(oyl-L-Ala-gamma-D-Glu-L-Lys-D-Ala-D-Ala)-di-trans,octa-cis-undecaprenyl diphosphate = [GlcNAc-(1-&gt;4)-Mur2Ac(oyl-L-Ala-gamma-D-Glu-L-Lys-D-Ala-D-Ala)](n+1)-di-trans,octa-cis-undecaprenyl diphosphate + di-trans,octa-cis-undecaprenyl diphosphate + H(+). The protein operates within cell wall biogenesis; peptidoglycan biosynthesis. Its function is as follows. Peptidoglycan polymerase that catalyzes glycan chain elongation from lipid-linked precursors. This is Biosynthetic peptidoglycan transglycosylase from Rhodospirillum centenum (strain ATCC 51521 / SW).